The following is a 247-amino-acid chain: MTVFVVFGGHGKVALLFTKIATEAGHIVYNVVRDYVQNEDIEKVHGRTSVCSLEKATPNDIAQFLAEIHPDVVIFAAGAGGKGGPERTRAVDYEGAIKVYDAMRIAGIRRLIMISAIDNRDMSQPPPPYYTAADIELSEKIHQSIGTYYHYKYLADQELVRRSSDIDWTILRPSGMTDEKGSGKVALGKISINCMMSRENVARTVLLFALDNQSIHLVVDMTDGNVPIYKAIAGFVVKGESSYTYSV.

The protein belongs to the UPF0659 family.

It localises to the cytoplasm. The protein resides in the nucleus. This Schizosaccharomyces pombe (strain 972 / ATCC 24843) (Fission yeast) protein is UPF0659 protein C216.03.